The chain runs to 1107 residues: Enolase-phosphatase E1 (1107 aa).

Mg(2+) contacts are provided by aspartate 19 and glutamate 21. Residues 152 to 153 (SS) and lysine 186 each bind substrate. Residue aspartate 211 participates in Mg(2+) binding. The disordered stretch occupies residues 258–1107 (SVKSTETENG…SATPSVETES (850 aa)). Over residues 260–289 (KSTETENGAEKETVTESTEKVADESEKETE) the composition is skewed to basic and acidic residues. Over residues 291–306 (ETAAAETENGAEAENG) the composition is skewed to low complexity. A compositionally biased stretch (acidic residues) spans 366–376 (DAMDVDAEMTD). Composition is skewed to basic and acidic residues over residues 393-427 (VTEKTETEESPKEKETEMEAEAEVSKTDEKEDTKQ) and 435-462 (GEDKKGDVINKNAEDDIKVEEEKNKEEE). A compositionally biased stretch (acidic residues) spans 475–485 (DKMDVDEEDSA). Composition is skewed to basic and acidic residues over residues 486 to 512 (VIEKKADNVDEKPVESTTDEVAKKEEN), 534 to 548 (DETKEAPSDAAKEES), 572 to 586 (TVEKSSAEKTESKSE), 593 to 604 (TSEKKVEDKSAN), 610 to 686 (KEPK…EVKA), and 693 to 776 (DESK…KSVD). Low complexity predominate over residues 794 to 803 (EETSATTEAQ). 2 stretches are compositionally biased toward basic and acidic residues: residues 804 to 838 (ATKEDEKPVDTKTNENDKTTPEVKATEEKTDDAKS) and 849 to 908 (KEMK…ETKG). The segment covering 909–919 (VEATTAGPVEE) has biased composition (low complexity). Positions 920 to 935 (VAVEATEEDVAMEAES) are enriched in acidic residues. Composition is skewed to basic and acidic residues over residues 937–957 (DAVKEETKTEEPKSKVDKLDS), 1001–1028 (DEVKENGTSEKVNTKEESRVPENGEADS), and 1035–1047 (NHDEKADSDKEND). A compositionally biased stretch (low complexity) spans 1048-1083 (TSASNIEEASSATTTTTNGTSTESDSSSTTPSSETV).

This sequence belongs to the HAD-like hydrolase superfamily. MasA/MtnC family. In terms of assembly, monomer. Mg(2+) serves as cofactor.

The protein localises to the cytoplasm. The protein resides in the nucleus. The catalysed reaction is 5-methylsulfanyl-2,3-dioxopentyl phosphate + H2O = 1,2-dihydroxy-5-(methylsulfanyl)pent-1-en-3-one + phosphate. The protein operates within amino-acid biosynthesis; L-methionine biosynthesis via salvage pathway; L-methionine from S-methyl-5-thio-alpha-D-ribose 1-phosphate: step 3/6. It functions in the pathway amino-acid biosynthesis; L-methionine biosynthesis via salvage pathway; L-methionine from S-methyl-5-thio-alpha-D-ribose 1-phosphate: step 4/6. In terms of biological role, bifunctional enzyme that catalyzes the enolization of 2,3-diketo-5-methylthiopentyl-1-phosphate (DK-MTP-1-P) into the intermediate 2-hydroxy-3-keto-5-methylthiopentenyl-1-phosphate (HK-MTPenyl-1-P), which is then dephosphorylated to form the acireductone 1,2-dihydroxy-3-keto-5-methylthiopentene (DHK-MTPene). This is Enolase-phosphatase E1 from Aedes aegypti (Yellowfever mosquito).